A 225-amino-acid chain; its full sequence is Putative amino-acid transporter YggA (225 aa).

The next 5 membrane-spanning stretches (helical) occupy residues 1–21, 37–57, 65–85, 116–136, and 150–170; these read MFAT…PIGA, LLTA…GVFG, SPIG…WFGI, LGVT…LGSF, and AVAM…AVVL.

It belongs to the LysE/ArgO transporter (TC 2.A.75) family.

The protein resides in the cell membrane. The polypeptide is Putative amino-acid transporter YggA (Aeromonas hydrophila).